We begin with the raw amino-acid sequence, 169 residues long: Interleukin-36 gamma (169 aa).

The propeptide occupies 1-17 (MRGTPGDADGGGRAVYQ).

This sequence belongs to the IL-1 family. Interacts with cargo receptor TMED10; the interaction mediates the translocation from the cytoplasm into the ERGIC (endoplasmic reticulum-Golgi intermediate compartment) and thereby secretion. N-terminal truncation leads to a dramatic enhancement of its activity (&gt;1000-fold). Proteolytically cleaved by cathepsin CTSG. As to expression, highly expressed in tissues containing epithelial cells: skin, lung, stomach and esophagus. Expressed in bronchial epithelial. In skin is expressed only in keratinocytes but not in fibroblasts, endothelial cells or melanocytes. Up-regulated in lesional psoriasis skin. Expressed in monocyte-derived dendritic cells and M1 macrophages.

The protein resides in the cytoplasm. It is found in the secreted. Its function is as follows. Cytokine that binds to and signals through the IL1RL2/IL-36R receptor which in turn activates NF-kappa-B and MAPK signaling pathways in target cells. Part of the IL-36 signaling system that is thought to be present in epithelial barriers and to take part in local inflammatory response; similar to the IL-1 system with which it shares the coreceptor IL1RAP. Seems to be involved in skin inflammatory response by acting on keratinocytes, dendritic cells and indirectly on T-cells to drive tissue infiltration, cell maturation and cell proliferation. In cultured keratinocytes induces the expression of macrophage, T-cell, and neutrophil chemokines, such as CCL3, CCL4, CCL5, CCL2, CCL17, CCL22, CL20, CCL5, CCL2, CCL17, CCL22, CXCL8, CCL20 and CXCL1; also stimulates its own expression and that of the prototypic cutaneous pro-inflammatory parameters TNF-alpha, S100A7/psoriasin and inducible NOS. May play a role in pro-inflammatory responses during particular neutrophilic airway inflammation: activates mitogen-activated protein kinases and NF-kappa B in primary lung fibroblasts, and stimulates the expression of IL-8 and CXCL3 and Th17 chemokine CCL20 in lung fibroblasts. May be involved in the innate immune response to fungal pathogens, such as Aspergillus fumigatus. This chain is Interleukin-36 gamma, found in Homo sapiens (Human).